The chain runs to 383 residues: Probable arabinan endo-1,5-alpha-L-arabinosidase D (383 aa).

The signal sequence occupies residues 1–22 (MVHITLPGLLLCLCLYLSVAPA). D49 functions as the Proton acceptor in the catalytic mechanism. N-linked (GlcNAc...) asparagine glycosylation is found at N75, N163, and N206. E227 functions as the Proton donor in the catalytic mechanism. A glycan (N-linked (GlcNAc...) asparagine) is linked at N325. N356 is lipidated: GPI-anchor amidated asparagine. Positions 357-383 (PGNSLQPPSSVSLQIVAFLCLVILFTL) are cleaved as a propeptide — removed in mature form.

It belongs to the glycosyl hydrolase 43 family.

Its subcellular location is the cell membrane. It catalyses the reaction Endohydrolysis of (1-&gt;5)-alpha-arabinofuranosidic linkages in (1-&gt;5)-arabinans.. The protein operates within glycan metabolism; L-arabinan degradation. Endo-1,5-alpha-L-arabinanase involved in degradation of pectin. Its preferred substrate is linear 1,5-alpha-L-arabinan. This is Probable arabinan endo-1,5-alpha-L-arabinosidase D (abnD) from Emericella nidulans (strain FGSC A4 / ATCC 38163 / CBS 112.46 / NRRL 194 / M139) (Aspergillus nidulans).